The chain runs to 318 residues: Biotin synthase (318 aa).

Residues 36–258 enclose the Radical SAM core domain; sequence HDPREVQLCT…VATTRILFPD (223 aa). Positions 54, 58, and 61 each coordinate [4Fe-4S] cluster. [2Fe-2S] cluster is bound by residues Cys-98, Cys-130, Cys-190, and Arg-262.

This sequence belongs to the radical SAM superfamily. Biotin synthase family. In terms of assembly, homodimer. The cofactor is [4Fe-4S] cluster. It depends on [2Fe-2S] cluster as a cofactor.

It carries out the reaction (4R,5S)-dethiobiotin + (sulfur carrier)-SH + 2 reduced [2Fe-2S]-[ferredoxin] + 2 S-adenosyl-L-methionine = (sulfur carrier)-H + biotin + 2 5'-deoxyadenosine + 2 L-methionine + 2 oxidized [2Fe-2S]-[ferredoxin]. It participates in cofactor biosynthesis; biotin biosynthesis; biotin from 7,8-diaminononanoate: step 2/2. Its function is as follows. Catalyzes the conversion of dethiobiotin (DTB) to biotin by the insertion of a sulfur atom into dethiobiotin via a radical-based mechanism. In Gloeobacter violaceus (strain ATCC 29082 / PCC 7421), this protein is Biotin synthase.